The chain runs to 42 residues: Daisho1 (42 aa).

The N-terminal stretch at 1–20 (MKFFQAAALLLAMFAALANA) is a signal peptide. Positions 21 to 26 (EPVPQP) are cleaved as a propeptide — removed by a dipeptidylpeptidase. At Thr-41 the chain carries Threonine amide.

In terms of tissue distribution, hemolymph (at protein level).

The protein resides in the secreted. In terms of biological role, peptide which plays a role in the humoral immune response to a subset of filamentous fungi, including F.oxysporum and F.verticillioides. The protein is Daisho1 of Drosophila melanogaster (Fruit fly).